A 384-amino-acid polypeptide reads, in one-letter code: Ribosomal RNA large subunit methyltransferase G (384 aa).

Belongs to the methyltransferase superfamily. RlmG family.

The protein localises to the cytoplasm. The enzyme catalyses guanosine(1835) in 23S rRNA + S-adenosyl-L-methionine = N(2)-methylguanosine(1835) in 23S rRNA + S-adenosyl-L-homocysteine + H(+). Its function is as follows. Specifically methylates the guanine in position 1835 (m2G1835) of 23S rRNA. In Pseudoalteromonas atlantica (strain T6c / ATCC BAA-1087), this protein is Ribosomal RNA large subunit methyltransferase G.